A 391-amino-acid polypeptide reads, in one-letter code: Chorismate synthase (391 aa).

Arginine 48 contacts NADP(+). FMN contacts are provided by residues 126-128 (RAS), glycine 286, 301-305 (KPTSS), and arginine 328.

The protein belongs to the chorismate synthase family. FMNH2 serves as cofactor.

The catalysed reaction is 5-O-(1-carboxyvinyl)-3-phosphoshikimate = chorismate + phosphate. Its pathway is metabolic intermediate biosynthesis; chorismate biosynthesis; chorismate from D-erythrose 4-phosphate and phosphoenolpyruvate: step 7/7. In terms of biological role, catalyzes the anti-1,4-elimination of the C-3 phosphate and the C-6 proR hydrogen from 5-enolpyruvylshikimate-3-phosphate (EPSP) to yield chorismate, which is the branch point compound that serves as the starting substrate for the three terminal pathways of aromatic amino acid biosynthesis. This reaction introduces a second double bond into the aromatic ring system. The polypeptide is Chorismate synthase (Saccharolobus islandicus (strain M.16.27) (Sulfolobus islandicus)).